The following is a 363-amino-acid chain: NAD(P)H-quinone oxidoreductase subunit 1, chloroplastic (363 aa).

8 helical membrane-spanning segments follow: residues 30-50 (LFPIFTLVLGITIGVLVIVWL), 98-118 (FSIGPSIAVISIFLSYSVIPF), 127-147 (LSIGVFFWIAISSIAPVGLLM), 165-185 (AAQSISYEIPLALCVLSISLL), 203-223 (FWGWNLWRQPIGFIVFLISSL), 248-268 (YSGIKFGLFYIASYLNLLVSS), 300-320 (VFGTLIGIFITLAKTYLFLFI), and 336-356 (LLNLGWKFLLPISLGNLLLTT).

The protein belongs to the complex I subunit 1 family. As to quaternary structure, NDH is composed of at least 16 different subunits, 5 of which are encoded in the nucleus.

The protein localises to the plastid. The protein resides in the chloroplast thylakoid membrane. It carries out the reaction a plastoquinone + NADH + (n+1) H(+)(in) = a plastoquinol + NAD(+) + n H(+)(out). The catalysed reaction is a plastoquinone + NADPH + (n+1) H(+)(in) = a plastoquinol + NADP(+) + n H(+)(out). Functionally, NDH shuttles electrons from NAD(P)H:plastoquinone, via FMN and iron-sulfur (Fe-S) centers, to quinones in the photosynthetic chain and possibly in a chloroplast respiratory chain. The immediate electron acceptor for the enzyme in this species is believed to be plastoquinone. Couples the redox reaction to proton translocation, and thus conserves the redox energy in a proton gradient. This Nicotiana tomentosiformis (Tobacco) protein is NAD(P)H-quinone oxidoreductase subunit 1, chloroplastic.